The primary structure comprises 1208 residues: DNA-directed RNA polymerase subunit beta (1208 aa).

The protein belongs to the RNA polymerase beta chain family. In terms of assembly, the RNAP catalytic core consists of 2 alpha, 1 beta, 1 beta' and 1 omega subunit. When a sigma factor is associated with the core the holoenzyme is formed, which can initiate transcription.

It carries out the reaction RNA(n) + a ribonucleoside 5'-triphosphate = RNA(n+1) + diphosphate. In terms of biological role, DNA-dependent RNA polymerase catalyzes the transcription of DNA into RNA using the four ribonucleoside triphosphates as substrates. This is DNA-directed RNA polymerase subunit beta from Enterococcus faecium (Streptococcus faecium).